Reading from the N-terminus, the 136-residue chain is UPF0216 protein PF0452 (136 aa).

It belongs to the UPF0216 family.

The chain is UPF0216 protein PF0452 from Pyrococcus furiosus (strain ATCC 43587 / DSM 3638 / JCM 8422 / Vc1).